We begin with the raw amino-acid sequence, 654 residues long: MENFMRIDSKESYENAVATLNAWAKAYYDDDAPIASDEEYDALYHEVLAYEQVNPAQKSLFSPTTRIGGGVSEGFSKARHIKQMWSMEDIFSQLELVAWLKRGEKQNLSFVAEPKFDGASLNLLYEKGMLVRAITRGDGITGEEVTQNARVIKSIPLNISYDGRIEIRGEVVIKKADFDAINEERTRNGETLLSNPRNAAAGSLRQLDSAVTAKRKLLFIPWGVGEQNLGLAKHSEVMKFVRDLGFYRDDFFKILDADGLAGAYNELLKQRDEKDVMMDGMVIRVDDLARCEELGYTVKFPKFMVAFKFPAIEKTTRLLDVALQVGRSGVVTPVGVLDEVVIDGARVKSATLHNFDEIERLGVMKNDLISIIRSGDVIPKITSVFKERRDGTQTPIIRPKFCPECGSHLLDEGVFIKCQNLNCRARVINSIIHYASKKCLNIDGLGEAIINLLYEKGLISRVIDIYSLKFEDLMALEGFKDKKAQNLLDAIEASKGASLARFITGLGCEHIGEVAAKKIAQNFGEGWLEADFDEVKNLEGFGEEMANSLMDFIEVNKDEILALQSIVRPSFERKQITQNAFSGKSVVITGTLSRPRDEIKAELEGYGAKVVGSVSKKTDFVLAGSNAGSKLQKAVELGVRVIDEGEFERLKLEI.

Residues 37-41, 86-87, and Glu113 contribute to the NAD(+) site; these read DEEYD and SM. The active-site N6-AMP-lysine intermediate is the Lys115. The NAD(+) site is built by Arg136, Glu170, and Lys308. Positions 402, 405, 418, and 423 each coordinate Zn(2+). The 79-residue stretch at 576-654 folds into the BRCT domain; sequence ITQNAFSGKS…GEFERLKLEI (79 aa).

It belongs to the NAD-dependent DNA ligase family. LigA subfamily. Mg(2+) is required as a cofactor. It depends on Mn(2+) as a cofactor.

It catalyses the reaction NAD(+) + (deoxyribonucleotide)n-3'-hydroxyl + 5'-phospho-(deoxyribonucleotide)m = (deoxyribonucleotide)n+m + AMP + beta-nicotinamide D-nucleotide.. Its function is as follows. DNA ligase that catalyzes the formation of phosphodiester linkages between 5'-phosphoryl and 3'-hydroxyl groups in double-stranded DNA using NAD as a coenzyme and as the energy source for the reaction. It is essential for DNA replication and repair of damaged DNA. In Campylobacter curvus (strain 525.92), this protein is DNA ligase.